The chain runs to 366 residues: Aliphatic nitrilase (366 aa).

One can recognise a CN hydrolase domain in the interval 8-282 (FKVAAVQAQP…EGILYADIDL (275 aa)). Residue Glu-48 is the Proton acceptor of the active site. The active-site Proton donor is Lys-131. Cys-165 (nucleophile) is an active-site residue. The disordered stretch occupies residues 346 to 366 (DEQRALPSTHSDETDRATASI). Basic and acidic residues predominate over residues 355 to 366 (HSDETDRATASI).

Belongs to the carbon-nitrogen hydrolase superfamily. Nitrilase family. In terms of assembly, homodimer.

The catalysed reaction is an aliphatic nitrile + 2 H2O = a carboxylate + NH4(+). This Rhodococcus rhodochrous protein is Aliphatic nitrilase (nitA).